We begin with the raw amino-acid sequence, 608 residues long: Centromere DNA-binding protein complex CBF3 subunit B (608 aa).

The zn(2)-C6 fungal-type DNA-binding region spans 14-42; it reads CSVCTRRKVKCDRMIPCGNCRKRGQDSEC. The residue at position 575 (Ser575) is a Phosphoserine.

In terms of assembly, component of the CBF3 copmplex, which is formed of CBF3A/CBF2, CBF3B/CEP3, CBF3C/CTF13 and CBF3D.

The protein resides in the nucleus. It is found in the chromosome. It localises to the centromere. Acts as a component of the centromere DNA-binding protein complex CBF3, which is essential for chromosome segregation and movement of centromeres along microtubules. CBF3 is required for the recruitment of other kinetochore complexes to CEN DNA. It plays a role in the attachment of chromosomes to the spindle and binds selectively to a highly conserved DNA sequence called CDEIII, found in centromers and in several promoters. This chain is Centromere DNA-binding protein complex CBF3 subunit B (CEP3), found in Saccharomyces cerevisiae (strain ATCC 204508 / S288c) (Baker's yeast).